The primary structure comprises 657 residues: Acetyl-coenzyme A synthetase (657 aa).

Residues 192–195 and Thr-311 each bind CoA; that span reads RRGK. ATP contacts are provided by residues 387-389, 411-416, Asp-504, Arg-519, and Arg-530; these read GEP and DTWWQT. Residues His-543 and Val-546 each contribute to the Mg(2+) site. Residue Arg-592 coordinates CoA. Lys-617 bears the N6-acetyllysine mark.

This sequence belongs to the ATP-dependent AMP-binding enzyme family. Mg(2+) serves as cofactor. Post-translationally, acetylated. Deacetylation by the SIR2-homolog deacetylase activates the enzyme.

The enzyme catalyses acetate + ATP + CoA = acetyl-CoA + AMP + diphosphate. Catalyzes the conversion of acetate into acetyl-CoA (AcCoA), an essential intermediate at the junction of anabolic and catabolic pathways. AcsA undergoes a two-step reaction. In the first half reaction, AcsA combines acetate with ATP to form acetyl-adenylate (AcAMP) intermediate. In the second half reaction, it can then transfer the acetyl group from AcAMP to the sulfhydryl group of CoA, forming the product AcCoA. The chain is Acetyl-coenzyme A synthetase from Campylobacter jejuni subsp. jejuni serotype O:6 (strain 81116 / NCTC 11828).